The primary structure comprises 461 residues: Chromosomal replication initiator protein DnaA (461 aa).

The segment at 1–68 (MINAWAQIEH…EKAAASVLGS (68 aa)) is domain I, interacts with DnaA modulators. The tract at residues 68 to 118 (SVPTITVVSGEEPAAAPRPVQVPAQKRPAAARTSGAEQMGLPLHYASRSAD) is domain II. The tract at residues 119 to 336 (SIKWMHSFDE…SCLRNLLLKA (218 aa)) is domain III, AAA+ region. ATP is bound by residues G162, G164, K165, and T166. The tract at residues 337-461 (RLLNQQITMD…VERNGRIIHP (125 aa)) is domain IV, binds dsDNA.

This sequence belongs to the DnaA family. As to quaternary structure, oligomerizes as a right-handed, spiral filament on DNA at oriC.

It is found in the cytoplasm. Its function is as follows. Plays an essential role in the initiation and regulation of chromosomal replication. ATP-DnaA binds to the origin of replication (oriC) to initiate formation of the DNA replication initiation complex once per cell cycle. Binds the DnaA box (a 9 base pair repeat at the origin) and separates the double-stranded (ds)DNA. Forms a right-handed helical filament on oriC DNA; dsDNA binds to the exterior of the filament while single-stranded (ss)DNA is stabiized in the filament's interior. The ATP-DnaA-oriC complex binds and stabilizes one strand of the AT-rich DNA unwinding element (DUE), permitting loading of DNA polymerase. After initiation quickly degrades to an ADP-DnaA complex that is not apt for DNA replication. Binds acidic phospholipids. The sequence is that of Chromosomal replication initiator protein DnaA from Oleidesulfovibrio alaskensis (strain ATCC BAA-1058 / DSM 17464 / G20) (Desulfovibrio alaskensis).